A 418-amino-acid polypeptide reads, in one-letter code: Zinc finger protein 566 (418 aa).

The KRAB domain occupies 6 to 77 (VMFSDVSVDF…DRELTRGQWP (72 aa)). The C2H2-type 1; degenerate zinc-finger motif lies at 169 to 193 (KFCASKEYRKTFRHGSQFATHEIIH). C2H2-type zinc fingers lie at residues 199-221 (YECKECGKSFRHPSRLTHHQKIH), 227-249 (FECKECGKTFICGSDLTRHHRIH), 255-277 (YECKECGKAFSSGSNFTRHQRIH), 283-305 (YECKECGKAFSSGSNFTQHQRIH), 311-333 (YECKECGNAFSQSSQLIKHQRIH), 339-361 (YECKECEKAFRSGSDLTRHQRIH), and 367-389 (YECKICGKAYSQSSQLISHHRIH). Glycyl lysine isopeptide (Lys-Gly) (interchain with G-Cter in SUMO2) cross-links involve residues K314 and K328.

It belongs to the krueppel C2H2-type zinc-finger protein family.

It is found in the nucleus. Functionally, may be involved in transcriptional regulation. In Homo sapiens (Human), this protein is Zinc finger protein 566 (ZNF566).